Here is a 149-residue protein sequence, read N- to C-terminus: Transcriptional repressor NrdR (149 aa).

A zinc finger spans residues 3-34; sequence CPFCFAVDTKVIDSRLVGEGSSVRRRRQCLVC. The 91-residue stretch at 49 to 139 folds into the ATP-cone domain; the sequence is PRVVKSNDVR…VYRSFEDIKE (91 aa).

It belongs to the NrdR family. Requires Zn(2+) as cofactor.

Functionally, negatively regulates transcription of bacterial ribonucleotide reductase nrd genes and operons by binding to NrdR-boxes. This is Transcriptional repressor NrdR from Escherichia fergusonii (strain ATCC 35469 / DSM 13698 / CCUG 18766 / IAM 14443 / JCM 21226 / LMG 7866 / NBRC 102419 / NCTC 12128 / CDC 0568-73).